Consider the following 284-residue polypeptide: L-ribulose-5-phosphate 3-epimerase UlaE (284 aa).

It belongs to the L-ribulose-5-phosphate 3-epimerase family.

The catalysed reaction is L-ribulose 5-phosphate = L-xylulose 5-phosphate. The protein operates within cofactor degradation; L-ascorbate degradation; D-xylulose 5-phosphate from L-ascorbate: step 3/4. Functionally, catalyzes the isomerization of L-xylulose-5-phosphate to L-ribulose-5-phosphate. Is involved in the anaerobic L-ascorbate utilization. This Salmonella dublin (strain CT_02021853) protein is L-ribulose-5-phosphate 3-epimerase UlaE.